Consider the following 487-residue polypeptide: Bifunctional protein HldE (487 aa).

The interval M1–E329 is ribokinase. N204–E207 is a binding site for ATP. D274 is an active-site residue. Residues F356–K487 form a cytidylyltransferase region.

It in the N-terminal section; belongs to the carbohydrate kinase PfkB family. The protein in the C-terminal section; belongs to the cytidylyltransferase family. As to quaternary structure, homodimer.

The catalysed reaction is D-glycero-beta-D-manno-heptose 7-phosphate + ATP = D-glycero-beta-D-manno-heptose 1,7-bisphosphate + ADP + H(+). The enzyme catalyses D-glycero-beta-D-manno-heptose 1-phosphate + ATP + H(+) = ADP-D-glycero-beta-D-manno-heptose + diphosphate. The protein operates within nucleotide-sugar biosynthesis; ADP-L-glycero-beta-D-manno-heptose biosynthesis; ADP-L-glycero-beta-D-manno-heptose from D-glycero-beta-D-manno-heptose 7-phosphate: step 1/4. Its pathway is nucleotide-sugar biosynthesis; ADP-L-glycero-beta-D-manno-heptose biosynthesis; ADP-L-glycero-beta-D-manno-heptose from D-glycero-beta-D-manno-heptose 7-phosphate: step 3/4. In terms of biological role, catalyzes the phosphorylation of D-glycero-D-manno-heptose 7-phosphate at the C-1 position to selectively form D-glycero-beta-D-manno-heptose-1,7-bisphosphate. Catalyzes the ADP transfer from ATP to D-glycero-beta-D-manno-heptose 1-phosphate, yielding ADP-D-glycero-beta-D-manno-heptose. This is Bifunctional protein HldE from Magnetococcus marinus (strain ATCC BAA-1437 / JCM 17883 / MC-1).